Here is a 552-residue protein sequence, read N- to C-terminus: Arginine--tRNA ligase (552 aa).

Residues 123–133 (ANPTGPLTIGR) carry the 'HIGH' region motif.

This sequence belongs to the class-I aminoacyl-tRNA synthetase family. As to quaternary structure, monomer.

It localises to the cytoplasm. It carries out the reaction tRNA(Arg) + L-arginine + ATP = L-arginyl-tRNA(Arg) + AMP + diphosphate. In Chlorobium luteolum (strain DSM 273 / BCRC 81028 / 2530) (Pelodictyon luteolum), this protein is Arginine--tRNA ligase.